Consider the following 221-residue polypeptide: Cytochrome c biogenesis ATP-binding export protein CcmA (221 aa).

The ABC transporter domain occupies 14–221 (LACHDVSCLR…FDLLDESHFS (208 aa)). Residue 46-53 (GANGIGKS) participates in ATP binding.

It belongs to the ABC transporter superfamily. CcmA exporter (TC 3.A.1.107) family. In terms of assembly, the complex is composed of two ATP-binding proteins (CcmA) and two transmembrane proteins (CcmB).

The protein localises to the cell inner membrane. The enzyme catalyses heme b(in) + ATP + H2O = heme b(out) + ADP + phosphate + H(+). In terms of biological role, part of the ABC transporter complex CcmAB involved in the biogenesis of c-type cytochromes; once thought to export heme, this seems not to be the case, but its exact role is uncertain. Responsible for energy coupling to the transport system. This chain is Cytochrome c biogenesis ATP-binding export protein CcmA, found in Zymomonas mobilis subsp. mobilis (strain ATCC 31821 / ZM4 / CP4).